Here is a 146-residue protein sequence, read N- to C-terminus: D-aminoacyl-tRNA deacylase (146 aa).

A Gly-cisPro motif, important for rejection of L-amino acids motif is present at residues 137 to 138 (GP).

Belongs to the DTD family. As to quaternary structure, homodimer.

Its subcellular location is the cytoplasm. The enzyme catalyses glycyl-tRNA(Ala) + H2O = tRNA(Ala) + glycine + H(+). The catalysed reaction is a D-aminoacyl-tRNA + H2O = a tRNA + a D-alpha-amino acid + H(+). Functionally, an aminoacyl-tRNA editing enzyme that deacylates mischarged D-aminoacyl-tRNAs. Also deacylates mischarged glycyl-tRNA(Ala), protecting cells against glycine mischarging by AlaRS. Acts via tRNA-based rather than protein-based catalysis; rejects L-amino acids rather than detecting D-amino acids in the active site. By recycling D-aminoacyl-tRNA to D-amino acids and free tRNA molecules, this enzyme counteracts the toxicity associated with the formation of D-aminoacyl-tRNA entities in vivo and helps enforce protein L-homochirality. The protein is D-aminoacyl-tRNA deacylase of Bacillus cereus (strain ATCC 14579 / DSM 31 / CCUG 7414 / JCM 2152 / NBRC 15305 / NCIMB 9373 / NCTC 2599 / NRRL B-3711).